A 236-amino-acid chain; its full sequence is Transcriptional regulatory protein RprY (236 aa).

The Response regulatory domain occupies 9–123; it reads RILLCEDDEN…ELTFRIEAIL (115 aa). At D58 the chain carries 4-aspartylphosphate. A DNA-binding region (ompR/PhoB-type) is located at residues 134 to 231; sequence SNVYKIGKFT…IHGKGYKLIT (98 aa).

In terms of processing, phosphorylated by RprX.

It localises to the cytoplasm. Member of the two-component regulatory system RprX/RprY. This is Transcriptional regulatory protein RprY (rprY) from Bacteroides fragilis (strain YCH46).